Reading from the N-terminus, the 139-residue chain is D-ribose pyranase (139 aa).

The active-site Proton donor is histidine 20. Residues aspartate 28, histidine 106, and 128 to 130 each bind substrate; that span reads YAN.

It belongs to the RbsD / FucU family. RbsD subfamily. In terms of assembly, homodecamer.

Its subcellular location is the cytoplasm. The catalysed reaction is beta-D-ribopyranose = beta-D-ribofuranose. The protein operates within carbohydrate metabolism; D-ribose degradation; D-ribose 5-phosphate from beta-D-ribopyranose: step 1/2. In terms of biological role, catalyzes the interconversion of beta-pyran and beta-furan forms of D-ribose. This is D-ribose pyranase from Actinobacillus pleuropneumoniae serotype 5b (strain L20).